Here is a 131-residue protein sequence, read N- to C-terminus: UPF0102 protein RPD_0400 (131 aa).

This sequence belongs to the UPF0102 family.

The sequence is that of UPF0102 protein RPD_0400 from Rhodopseudomonas palustris (strain BisB5).